The sequence spans 138 residues: Large ribosomal subunit protein uL16 (138 aa).

Belongs to the universal ribosomal protein uL16 family. Part of the 50S ribosomal subunit.

Binds 23S rRNA and is also seen to make contacts with the A and possibly P site tRNAs. The polypeptide is Large ribosomal subunit protein uL16 (Acholeplasma laidlawii (strain PG-8A)).